Consider the following 548-residue polypeptide: uncharacterized protein (548 aa).

A DhaL domain is found at 8 to 200; that stretch reads KLFADMIIQG…LLCVYEGFLK (193 aa).

This is an uncharacterized protein from Staphylococcus aureus (strain MRSA252).